The chain runs to 609 residues: Proteasome-associated ATPase (609 aa).

Positions 1 to 25 (MADSERSEAFGTPDDTPLSSNDAAE) are disordered. The stretch at 19–96 (SSNDAAELEQ…LREEVDRLGQ (78 aa)) forms a coiled coil. 296-301 (GCGKTL) is a binding site for ATP. Residues 608–609 (YL) are docks into pockets in the proteasome alpha-ring.

It belongs to the AAA ATPase family. In terms of assembly, homohexamer. Assembles into a hexameric ring structure that caps the 20S proteasome core. Strongly interacts with the prokaryotic ubiquitin-like protein Pup through a hydrophobic interface; the interacting region of ARC lies in its N-terminal coiled-coil domain. There is one Pup binding site per ARC hexamer ring. Upon ATP-binding, the C-terminus of ARC interacts with the alpha-rings of the proteasome core, possibly by binding to the intersubunit pockets.

The protein operates within protein degradation; proteasomal Pup-dependent pathway. Functionally, ATPase which is responsible for recognizing, binding, unfolding and translocation of pupylated proteins into the bacterial 20S proteasome core particle. May be essential for opening the gate of the 20S proteasome via an interaction with its C-terminus, thereby allowing substrate entry and access to the site of proteolysis. Thus, the C-termini of the proteasomal ATPase may function like a 'key in a lock' to induce gate opening and therefore regulate proteolysis. This is Proteasome-associated ATPase from Mycobacterium marinum (strain ATCC BAA-535 / M).